An 84-amino-acid chain; its full sequence is Defensin-like protein 172 (84 aa).

A signal peptide spans 1–23 (MAKASSTLVLSIIFLVMFALVEQ). Disulfide bonds link C27–C74, C34–C56, C40–C68, and C44–C70.

The protein belongs to the DEFL family.

Its subcellular location is the secreted. The sequence is that of Defensin-like protein 172 (LCR60) from Arabidopsis thaliana (Mouse-ear cress).